The primary structure comprises 88 residues: Large ribosomal subunit protein bL27 (88 aa).

Residues 1 to 21 (MAHKKGQGSTQNNRDSAGRRL) are disordered.

This sequence belongs to the bacterial ribosomal protein bL27 family.

The protein is Large ribosomal subunit protein bL27 of Helicobacter acinonychis (strain Sheeba).